Here is a 463-residue protein sequence, read N- to C-terminus: L-seryl-tRNA(Sec) selenium transferase (463 aa).

Lys-295 is modified (N6-(pyridoxal phosphate)lysine).

This sequence belongs to the SelA family. As to quaternary structure, homodecamer; pentamer of dimers. Binds only one seryl-tRNA(Sec) per dimer. Pyridoxal 5'-phosphate serves as cofactor.

Its subcellular location is the cytoplasm. The catalysed reaction is L-seryl-tRNA(Sec) + selenophosphate + H(+) = L-selenocysteinyl-tRNA(Sec) + phosphate. It participates in aminoacyl-tRNA biosynthesis; selenocysteinyl-tRNA(Sec) biosynthesis; selenocysteinyl-tRNA(Sec) from L-seryl-tRNA(Sec) (bacterial route): step 1/1. Converts seryl-tRNA(Sec) to selenocysteinyl-tRNA(Sec) required for selenoprotein biosynthesis. This chain is L-seryl-tRNA(Sec) selenium transferase, found in Escherichia coli O127:H6 (strain E2348/69 / EPEC).